The sequence spans 294 residues: Small ribosomal subunit protein uS2 (294 aa).

The protein belongs to the universal ribosomal protein uS2 family.

This Mycoplasma pneumoniae (strain ATCC 29342 / M129 / Subtype 1) (Mycoplasmoides pneumoniae) protein is Small ribosomal subunit protein uS2 (rpsB).